The following is a 140-amino-acid chain: Large ribosomal subunit protein bL17 (140 aa).

The protein belongs to the bacterial ribosomal protein bL17 family. Part of the 50S ribosomal subunit. Contacts protein L32.

This is Large ribosomal subunit protein bL17 from Roseobacter denitrificans (strain ATCC 33942 / OCh 114) (Erythrobacter sp. (strain OCh 114)).